A 151-amino-acid polypeptide reads, in one-letter code: Transcriptional repressor NrdR (151 aa).

A zinc finger lies at 3 to 34 (CPFCNSVDTSVKNSRPSDCKMSVRRRRSCDSC). In terms of domain architecture, ATP-cone spans 49–139 (VKVLKKDGSV…VYMNFSDVND (91 aa)).

The protein belongs to the NrdR family. Requires Zn(2+) as cofactor.

In terms of biological role, negatively regulates transcription of bacterial ribonucleotide reductase nrd genes and operons by binding to NrdR-boxes. This chain is Transcriptional repressor NrdR, found in Anaplasma marginale (strain Florida).